A 575-amino-acid polypeptide reads, in one-letter code: V-type ATP synthase alpha chain (575 aa).

Glycine 238–threonine 245 contacts ATP.

This sequence belongs to the ATPase alpha/beta chains family.

The catalysed reaction is ATP + H2O + 4 H(+)(in) = ADP + phosphate + 5 H(+)(out). Functionally, produces ATP from ADP in the presence of a proton gradient across the membrane. The V-type alpha chain is a catalytic subunit. The chain is V-type ATP synthase alpha chain from Borreliella afzelii (strain PKo) (Borrelia afzelii).